A 275-amino-acid chain; its full sequence is Large ribosomal subunit protein uL2 (275 aa).

Residues 222–275 (GVAMNPVDHPHGGGEGRNKGRHPTSPWGQKSKGLKTRHNKRTDNMIIRRRAKKK) form a disordered region. Positions 229–239 (DHPHGGGEGRN) are enriched in basic and acidic residues.

This sequence belongs to the universal ribosomal protein uL2 family. In terms of assembly, part of the 50S ribosomal subunit. Forms a bridge to the 30S subunit in the 70S ribosome.

In terms of biological role, one of the primary rRNA binding proteins. Required for association of the 30S and 50S subunits to form the 70S ribosome, for tRNA binding and peptide bond formation. It has been suggested to have peptidyltransferase activity; this is somewhat controversial. Makes several contacts with the 16S rRNA in the 70S ribosome. The protein is Large ribosomal subunit protein uL2 of Psychrobacter cryohalolentis (strain ATCC BAA-1226 / DSM 17306 / VKM B-2378 / K5).